We begin with the raw amino-acid sequence, 128 residues long: Capsid protein (128 aa).

RNA-binding residues include arginine 40, arginine 46, alanine 53, arginine 55, lysine 59, aspartate 61, valine 84, serine 86, and threonine 90.

Belongs to the Leviviricetes capsid protein family. In terms of assembly, homodimer. The dimers in the capsid are covalently linked with disulfide bridges. The homodimers binds to the viral RNA via an operator hairpin, but also to many other RNA sequences in the viral genome; this interaction probably shifts the virus from the replicative to the assembly phase and ensures specific encapsidation of the viral genome.

Its subcellular location is the virion. Its function is as follows. Capsid protein self-assembles to form an icosahedral capsid with a T=3 symmetry, about 26 nm in diameter, and consisting of 89 capsid proteins dimers (178 capsid proteins). Involved in viral genome encapsidation through the interaction between a capsid protein dimer and the multiple packaging signals present in the RNA genome. Acts as a translational repressor of viral replicase synthesis late in infection. This latter function is the result of capsid protein interaction with an RNA hairpin which contains the replicase ribosome-binding site. In Pseudomonas aeruginosa (Bacteriophage PP7), this protein is Capsid protein.